The chain runs to 517 residues: Zinc finger protein 215 (517 aa).

One can recognise an SCAN box domain in the interval 48-126 (RQKFRHFQYL…EDMVTLIEDV (79 aa)). Positions 164 to 237 (VTFKDVVVEF…EKEIPRKTIF (74 aa)) constitute a KRAB domain. 4 C2H2-type zinc fingers span residues 379–401 (YECY…QIIH), 407–429 (YKCS…QKLH), 462–484 (YECV…QMIH), and 490–512 (FKCK…QKLH).

The protein belongs to the krueppel C2H2-type zinc-finger protein family.

It is found in the nucleus. May be involved in transcriptional regulation. This Pongo abelii (Sumatran orangutan) protein is Zinc finger protein 215 (ZNF215).